Here is a 1600-residue protein sequence, read N- to C-terminus: E3 ubiquitin-protein ligase listerin (1600 aa).

11 HEAT repeats span residues 31–65, 114–150, 161–202, 245–288, 291–344, 526–606, 853–904, 962–986, 1045–1083, 1289–1324, and 1325–1369; these read SSVPQDVIVPFKNLLKRDSTTKSKALEEILACVKK, KTLPKLVGPWVAGTFDKDKGVARAALAVSAHILDSDQ, GKLL…SSMA, YQLV…DLLR, ISVT…PDYA, RNYK…AALS, YTTN…DIRT, YASKALTELFQALVSVHGYPAGAKF, LYNVVLLNICLSVYPPAKTPVEQRKLVFALKQFTTWVQT, VDVRSYLLGWHLVFDAYNQAPLQVRKQYTDSLKADN, and SLNA…EEGT. The RING-type; degenerate zinc-finger motif lies at 1537–1583; it reads CPICYAVVSADKKLPDKRCSTCNNLFHRLCLYKWFQNSNKNTCPLCR.

This sequence belongs to the LTN1 family. Component of the ribosome quality control complex (RQC), composed of the E3 ubiquitin ligase RKR1/LTN1, RQC1 and RQC2, as well as CDC48 and its ubiquitin-binding cofactors associated with the 60S ribosomal subunits.

Its subcellular location is the nucleus. The protein localises to the cytoplasm. The protein resides in the cytosol. It catalyses the reaction S-ubiquitinyl-[E2 ubiquitin-conjugating enzyme]-L-cysteine + [acceptor protein]-L-lysine = [E2 ubiquitin-conjugating enzyme]-L-cysteine + N(6)-ubiquitinyl-[acceptor protein]-L-lysine.. It participates in protein modification; protein ubiquitination. In terms of biological role, E3 ubiquitin-protein ligase component of the ribosome quality control complex (RQC), a ribosome-associated complex that mediates ubiquitination and extraction of incompletely synthesized nascent chains for proteasomal degradation. Mediates ubiquitination of proteins derived from mRNAs lacking stop codons (non-stop proteins) and other translation arrest products induced by poly-lysine sequences and tandem rare codons. Ubiquitination leads to CDC48 recruitment for extraction and degradation of the incomplete translation product. May indirectly play a role in chromatin function and transcription. In Neurospora crassa (strain ATCC 24698 / 74-OR23-1A / CBS 708.71 / DSM 1257 / FGSC 987), this protein is E3 ubiquitin-protein ligase listerin (rkr-1).